The following is a 398-amino-acid chain: Bone morphogenetic protein 2-A (398 aa).

Positions 1–23 (MVAGIHSLLLLLFYQVLLSGCTG) are cleaved as a signal peptide. The propeptide occupies 24 to 284 (LIPEEGKRKY…GHALHKRQKR (261 aa)). 3 N-linked (GlcNAc...) asparagine glycosylation sites follow: Asn-137, Asn-202, and Asn-340. Disulfide bonds link Cys-298/Cys-363, Cys-327/Cys-395, and Cys-331/Cys-397.

Belongs to the TGF-beta family. In terms of assembly, homodimer; disulfide-linked.

The protein localises to the secreted. Its function is as follows. Induces cartilage and bone formation. In Xenopus laevis (African clawed frog), this protein is Bone morphogenetic protein 2-A (bmp2-a).